The following is a 514-amino-acid chain: Histidine ammonia-lyase (514 aa).

A cross-link (5-imidazolinone (Ala-Gly)) is located at residues 143 to 145 (ASG). Ser144 bears the 2,3-didehydroalanine (Ser) mark.

This sequence belongs to the PAL/histidase family. Contains an active site 4-methylidene-imidazol-5-one (MIO), which is formed autocatalytically by cyclization and dehydration of residues Ala-Ser-Gly.

The protein resides in the cytoplasm. It catalyses the reaction L-histidine = trans-urocanate + NH4(+). The protein operates within amino-acid degradation; L-histidine degradation into L-glutamate; N-formimidoyl-L-glutamate from L-histidine: step 1/3. In Photorhabdus laumondii subsp. laumondii (strain DSM 15139 / CIP 105565 / TT01) (Photorhabdus luminescens subsp. laumondii), this protein is Histidine ammonia-lyase.